The sequence spans 271 residues: Tryptophan synthase alpha chain (271 aa).

Active-site proton acceptor residues include Glu-49 and Asp-60.

Belongs to the TrpA family. As to quaternary structure, tetramer of two alpha and two beta chains.

It catalyses the reaction (1S,2R)-1-C-(indol-3-yl)glycerol 3-phosphate + L-serine = D-glyceraldehyde 3-phosphate + L-tryptophan + H2O. It participates in amino-acid biosynthesis; L-tryptophan biosynthesis; L-tryptophan from chorismate: step 5/5. Functionally, the alpha subunit is responsible for the aldol cleavage of indoleglycerol phosphate to indole and glyceraldehyde 3-phosphate. In Leptothrix cholodnii (strain ATCC 51168 / LMG 8142 / SP-6) (Leptothrix discophora (strain SP-6)), this protein is Tryptophan synthase alpha chain.